A 494-amino-acid polypeptide reads, in one-letter code: Truncated non-functional calcium-binding mitochondrial carrier SAL1-1 (494 aa).

Residues 11–46 form the EF-hand 1 domain; that stretch reads QRDIRYACLFKELDVKGNGQVTLDNLISAFEKNDHP. Lysine 65, aspartate 70, aspartate 93, aspartate 95, aspartate 97, lysine 99, and glutamate 104 together coordinate Ca(2+). EF-hand domains are found at residues 80-115, 120-155, and 156-191; these read NAESQIWNGFQRIDLDHDGKIGINEINRYLSDLDNQ, NELNHELSNEKVNKFSRFFEWAFPKRKANIALRGQA, and SHKKNTDNDRSKKTTDSDLYVTYDQWRDFLLLVPRK. Ca(2+) contacts are provided by threonine 161 and serine 166. 2 Solcar repeats span residues 225–332 and 345–434; these read IRGF…TKKI and LSKF…LKKM. 5 helical membrane passes run 231–248, 307–326, 355–368, 409–428, and 458–475; these read FIAGGISGVISRTCTAPF, GNGLNVIKVFPESSIKFGSF, GLAGMAAQFSVYPI, RCHSRYSGHISLCCIRFGDF, and TSNGCIQWNCRSFCCLSN. The Solcar 3; truncated repeat unit spans residues 452–494; it reads SKQPGCTSNGCIQWNCRSFCCLSNQSFKNKTTSPRNICTSLCV.

This sequence belongs to the mitochondrial carrier (TC 2.A.29) family.

Its subcellular location is the mitochondrion inner membrane. Calcium-dependent mitochondrial solute carrier. The polypeptide is Truncated non-functional calcium-binding mitochondrial carrier SAL1-1 (SAL1) (Saccharomyces cerevisiae (strain ATCC 204508 / S288c) (Baker's yeast)).